The sequence spans 794 residues: Transcription factor TOG1 (794 aa).

6 residues coordinate Zn(2+): C18, C21, C28, C34, C37, and C44. The zn(2)-C6 fungal-type DNA-binding region spans 18-44 (CDRCHRKKIKCNSKKPCFGCIGSQSKC).

The protein localises to the nucleus. In terms of biological role, transcriptional activator required for growth on non-fermentable carbon sources and that regulates genes involved in fatty acid utilization. Acts as a direct activator that binds the promoters of oleate utilizing genes, encoded key enzymes in beta-oxidation and NADPH regeneration (POX1, FOX2,POT1 and IDP2), the glyoxylate shunt (MLS1 and ICL1), and gluconeogenesis (PCK1 and FBP1). Also regulates the abundance of peroxisomes that are vital for fatty acid oxidation. This chain is Transcription factor TOG1, found in Saccharomyces cerevisiae (strain ATCC 204508 / S288c) (Baker's yeast).